Reading from the N-terminus, the 440-residue chain is 5-methylthioadenosine/S-adenosylhomocysteine deaminase (440 aa).

Residues His69 and His71 each coordinate Zn(2+). Residues Glu98 and His190 each contribute to the substrate site. Residue His217 coordinates Zn(2+). Substrate contacts are provided by Glu220 and Asp305. Asp305 contacts Zn(2+).

It belongs to the metallo-dependent hydrolases superfamily. MTA/SAH deaminase family. Zn(2+) is required as a cofactor.

It catalyses the reaction S-adenosyl-L-homocysteine + H2O + H(+) = S-inosyl-L-homocysteine + NH4(+). It carries out the reaction S-methyl-5'-thioadenosine + H2O + H(+) = S-methyl-5'-thioinosine + NH4(+). Its function is as follows. Catalyzes the deamination of 5-methylthioadenosine and S-adenosyl-L-homocysteine into 5-methylthioinosine and S-inosyl-L-homocysteine, respectively. Is also able to deaminate adenosine. This chain is 5-methylthioadenosine/S-adenosylhomocysteine deaminase, found in Desulfovibrio desulfuricans (strain ATCC 27774 / DSM 6949 / MB).